Here is a 965-residue protein sequence, read N- to C-terminus: Collagen alpha-1(I) chain (965 aa).

Residues 1 to 21 (SVPGPMGPSGPRGLPGPPGPG) are compositionally biased toward pro residues. A disordered region spans residues 1-965 (SVPGPMGPSG…PGPPGPPGPP (965 aa)). 4-hydroxyproline is present on residues Pro-15, Pro-18, Pro-20, Pro-29, Pro-32, Pro-35, Pro-49, Pro-64, Pro-70, Pro-79, and Pro-85. The segment covering 52–66 (NGDDGEAGKPGRPGE) has biased composition (basic and acidic residues). At Lys-88 the chain carries 5-hydroxylysine; alternate. The O-linked (Gal...) hydroxylysine; alternate glycan is linked to Lys-88. Position 94 is a phosphoserine (Ser-94). Low complexity predominate over residues 102–118 (DAGPAGPKGEPGSPGEN). A 4-hydroxyproline mark is found at Pro-112, Pro-115, Pro-121, Pro-130, Pro-136, Pro-157, Pro-166, Pro-169, Pro-196, Pro-199, Pro-211, Pro-217, Pro-226, Pro-232, Pro-235, and Pro-250. The segment covering 136 to 154 (PGASGPAGARGNDGATGAA) has biased composition (low complexity). Pro residues predominate over residues 156-168 (PPGPTGPAGPPGF). The segment covering 202 to 241 (AGAAGPAGNPGADGQPGAKGANGAPGIAGAPGFPGARGPS) has biased composition (low complexity). Lys-253 is modified (5-hydroxylysine). 4-hydroxyproline is present on residues Pro-259, Pro-262, Pro-273, Pro-282, Pro-297, Pro-303, Pro-312, and Pro-318. Positions 307-327 (GERGGPGSRGFPGADGAGPKG) are enriched in gly residues. Lys-326 carries the 5-hydroxylysine modification. Pro-335, Pro-344, Pro-350, Pro-356, Pro-365, Pro-368, Pro-377, Pro-386, Pro-392, Pro-404, Pro-413, Pro-422, Pro-425, Pro-443, Pro-460, Pro-466, Pro-472, Pro-480, Pro-492, Pro-501, Pro-509, Pro-515, and Pro-524 each carry 4-hydroxyproline. A compositionally biased stretch (low complexity) spans 359–385 (KGLTGSPGSPGPDGKTGPPGPAGQDGR). Positions 394–413 (ARGQAGVMGFPGPKGAAGEP) are enriched in low complexity. The segment covering 472–482 (PGEADLGAPGP) has biased composition (low complexity). Position 536 is a 5-hydroxylysine (Lys-536). 4-hydroxyproline occurs at positions 542, 557, and 563. Low complexity predominate over residues 569-583 (SGPSGPAGPTGARGA). Residue Ser-572 is modified to Phosphoserine. 4-hydroxyproline is present on residues Pro-584, Pro-590, Pro-593, Pro-602, Pro-608, Pro-626, Pro-635, and Pro-644. Over residues 596 to 623 (AGFAGPPGADGQPGAKGEPGDAGAKGDA) the composition is skewed to low complexity. Pro residues predominate over residues 625–637 (PPGPAGPTGPPGP). At Lys-647 the chain carries 5-hydroxylysine. The span at 652–668 (SAGPPGATGFPGAAGRV) shows a compositional bias: low complexity. 2 positions are modified to 4-hydroxyproline: Pro-656 and Pro-662. Pro-670 carries the 3-hydroxyproline modification. 16 positions are modified to 4-hydroxyproline: Pro-671, Pro-680, Pro-683, Pro-704, Pro-713, Pro-721, Pro-730, Pro-748, Pro-757, Pro-760, Pro-766, Pro-771, Pro-777, Pro-783, Pro-791, and Pro-797. The segment covering 697–706 (ETGPAGRPGE) has biased composition (low complexity). A compositionally biased stretch (low complexity) spans 718–730 (KGSPGADGPAGAP). The segment covering 768-780 (KGPPGPMGPPGLA) has biased composition (pro residues). Position 806 is a 5-hydroxylysine (Lys-806). Pro residues predominate over residues 815 to 830 (SGPPGAPGAPGAPGPV). 4-hydroxyproline is present on residues Pro-818, Pro-821, and Pro-824. Positions 851–865 (AGPAGARGPAGPQGP) are enriched in low complexity. The span at 866-880 (RGDKGETGEQGDRGI) shows a compositional bias: basic and acidic residues. The residue at position 869 (Lys-869) is a 5-hydroxylysine. Position 881 is a 5-hydroxylysine; alternate (Lys-881). O-linked (Gal...) hydroxylysine; alternate glycosylation occurs at Lys-881. 4 positions are modified to 4-hydroxyproline: Pro-896, Pro-899, Pro-917, and Pro-932. A compositionally biased stretch (low complexity) spans 899 to 932 (PGEQGPSGASGPAGPRGPPGSAGSPGKDGLNGLP). Pro-937 is subject to 3-hydroxyproline. The residue at position 938 (Pro-938) is a 4-hydroxyproline. The span at 950-965 (VGPPGPPGPPGPPGPP) shows a compositional bias: pro residues. At Pro-952 the chain carries 3-hydroxyproline. A 4-hydroxyproline modification is found at Pro-953. Pro-955 is modified (3-hydroxyproline). Pro-956 carries the 4-hydroxyproline modification. The residue at position 958 (Pro-958) is a 3-hydroxyproline. Residues Pro-959, Pro-962, and Pro-965 each carry the 4-hydroxyproline modification.

It belongs to the fibrillar collagen family. In terms of assembly, trimers of one alpha 2(I) and two alpha 1(I) chains. In terms of processing, contains mostly 4-hydroxyproline. Proline residues at the third position of the tripeptide repeating unit (G-X-Y) are hydroxylated in some or all of the chains. Post-translationally, contains 3-hydroxyproline at a few sites. This modification occurs on the first proline residue in the sequence motif Gly-Pro-Hyp, where Hyp is 4-hydroxyproline. Lysine residues at the third position of the tripeptide repeating unit (G-X-Y) are 5-hydroxylated in some or all of the chains. In terms of processing, O-glycosylated on hydroxylated lysine residues. The O-linked glycan consists of a Glc-Gal disaccharide. As to expression, expressed in bones.

The protein resides in the secreted. Its subcellular location is the extracellular space. The protein localises to the extracellular matrix. In terms of biological role, type I collagen is a member of group I collagen (fibrillar forming collagen). The chain is Collagen alpha-1(I) chain from Scelidotherium sp. (strain SLP-2019) (South American ground sloth).